The chain runs to 536 residues: Interferon alpha/beta receptor 2 (536 aa).

Positions 1 to 26 (MLLSQNVSAIGPLNLYPMVHISLVFG) are cleaved as a signal peptide. Residues 27 to 246 (ISYVVPDLSD…RESESSEPAT (220 aa)) are Extracellular-facing. 2 cysteine pairs are disulfide-bonded: cysteine 39–cysteine 122 and cysteine 85–cysteine 93. N-linked (GlcNAc...) asparagine glycosylation is found at asparagine 58, asparagine 87, asparagine 101, asparagine 147, and asparagine 191. Cysteine 210 and cysteine 230 are oxidised to a cystine. The helical transmembrane segment at 247–267 (IGGILILFLLAAVCISTVMIL) threads the bilayer. Topologically, residues 268–536 (KRIGYICLRN…VRQVNLKNFN (269 aa)) are cytoplasmic. Tyrosine 340 is modified (phosphotyrosine). A run of 3 repeats spans residues 358–362 (SLEDC), 363–367 (SLEDC), and 368–372 (SLEDC). The tract at residues 358-372 (SLEDCSLEDCSLEDC) is 3 X 5 AA tandem repeats of S-L-E-D-C. The tract at residues 369–434 (LEDCSDPSAE…SDSTEGSEGR (66 aa)) is disordered. Residues 420 to 429 (TSEEDSDSTE) are compositionally biased toward acidic residues. Residues 432–456 (EGRIVFNVNLNSVCVRALEDDKDSE) form a mediates interaction with STAT2 (and required for the recruitment of USP18) region. Serine 480 carries the phosphoserine modification. Residues 487–522 (EEGTQLPFTDPSMECLRPQDALSDKSDTSESDVDIG) are disordered. At tyrosine 525 the chain carries Phosphotyrosine.

Belongs to the type II cytokine receptor family. Heterodimer with IFNAR1; forming the receptor for type I interferon. Interacts with the transcriptional factors STAT1 and STAT2. Interacts with JAK1. Interacts with USP18; indirectly via STAT2, it negatively regulates the assembly of the ternary interferon-IFNAR1-IFNAR2 complex and therefore type I interferon signaling. Post-translationally, phosphorylated on tyrosine residues upon interferon binding. Phosphorylation at Tyr-340 or Tyr-525 are sufficient to mediate interferon dependent activation of STAT1, STAT2 and STAT3 leading to antiproliferative effects on many different cell types. In terms of tissue distribution, expressed in the endometrium. Expressed in all tissues examined except conceptus at day 15 of pregnancy.

Its subcellular location is the cell membrane. In terms of biological role, together with IFNAR1, forms the heterodimeric receptor for type I interferons (including interferons alpha, beta, epsilon, omega and kappa). Type I interferon binding activates the JAK-STAT signaling cascade, resulting in transcriptional activation or repression of interferon-regulated genes that encode the effectors of the interferon response. Mechanistically, type I interferon-binding brings the IFNAR1 and IFNAR2 subunits into close proximity with one another, driving their associated Janus kinases (JAKs) (TYK2 bound to IFNAR1 and JAK1 bound to IFNAR2) to cross-phosphorylate one another. The activated kinases phosphorylate specific tyrosine residues on the intracellular domains of IFNAR1 and IFNAR2, forming docking sites for the STAT transcription factors (STAT1, STAT2 and STAT). STAT proteins are then phosphorylated by the JAKs, promoting their translocation into the nucleus to regulate expression of interferon-regulated genes. The sequence is that of Interferon alpha/beta receptor 2 (IFNAR2) from Ovis aries (Sheep).